Reading from the N-terminus, the 76-residue chain is Protein MATERNALLY EXPRESSED GENE 4 (76 aa).

Residues methionine 1–glycine 27 form the signal peptide. Residues cysteine 53 and cysteine 75 are joined by a disulfide bond.

Belongs to the MEG family. In terms of tissue distribution, expressed exclusively in endosperm.

This is Protein MATERNALLY EXPRESSED GENE 4 (MEG4) from Zea mays (Maize).